A 414-amino-acid chain; its full sequence is Lipoyl synthase, mitochondrial (414 aa).

A mitochondrion-targeting transit peptide spans 1–31; that stretch reads MAVSTSHFRSLCASRPLSRTAIVGHISCRSY. Residues 31–51 are disordered; the sequence is YATTEPSPSATSTSTTTTARR. Low complexity predominate over residues 32–48; sequence ATTEPSPSATSTSTTTT. Residues Cys131, Cys136, Cys142, Cys162, Cys166, Cys169, and Ser377 each coordinate [4Fe-4S] cluster. Positions 145 to 366 constitute a Radical SAM core domain; it reads GSDKSAATAT…RQRALDMGFL (222 aa).

The protein belongs to the radical SAM superfamily. Lipoyl synthase family. Requires [4Fe-4S] cluster as cofactor.

The protein localises to the mitochondrion. It carries out the reaction [[Fe-S] cluster scaffold protein carrying a second [4Fe-4S](2+) cluster] + N(6)-octanoyl-L-lysyl-[protein] + 2 oxidized [2Fe-2S]-[ferredoxin] + 2 S-adenosyl-L-methionine + 4 H(+) = [[Fe-S] cluster scaffold protein] + N(6)-[(R)-dihydrolipoyl]-L-lysyl-[protein] + 4 Fe(3+) + 2 hydrogen sulfide + 2 5'-deoxyadenosine + 2 L-methionine + 2 reduced [2Fe-2S]-[ferredoxin]. Its pathway is protein modification; protein lipoylation via endogenous pathway; protein N(6)-(lipoyl)lysine from octanoyl-[acyl-carrier-protein]: step 2/2. Catalyzes the radical-mediated insertion of two sulfur atoms into the C-6 and C-8 positions of the octanoyl moiety bound to the lipoyl domains of lipoate-dependent enzymes, thereby converting the octanoylated domains into lipoylated derivatives. The chain is Lipoyl synthase, mitochondrial from Aspergillus fumigatus (strain CBS 144.89 / FGSC A1163 / CEA10) (Neosartorya fumigata).